The following is a 379-amino-acid chain: Chaperone protein DnaJ (379 aa).

Positions 5 to 69 (EYYERLGVDK…QKRAAYDQYG (65 aa)) constitute a J domain. The CR-type zinc finger occupies 141 to 223 (GVEKQVKYNR…CHGSGHEKVA (83 aa)). Zn(2+)-binding residues include cysteine 154, cysteine 157, cysteine 171, cysteine 174, cysteine 197, cysteine 200, cysteine 211, and cysteine 214. CXXCXGXG motif repeat units lie at residues 154 to 161 (CHTCGGSG), 171 to 178 (CHKCGGRG), 197 to 204 (CDVCHGTG), and 211 to 218 (CTTCHGSG).

It belongs to the DnaJ family. Homodimer. It depends on Zn(2+) as a cofactor.

Its subcellular location is the cytoplasm. Functionally, participates actively in the response to hyperosmotic and heat shock by preventing the aggregation of stress-denatured proteins and by disaggregating proteins, also in an autonomous, DnaK-independent fashion. Unfolded proteins bind initially to DnaJ; upon interaction with the DnaJ-bound protein, DnaK hydrolyzes its bound ATP, resulting in the formation of a stable complex. GrpE releases ADP from DnaK; ATP binding to DnaK triggers the release of the substrate protein, thus completing the reaction cycle. Several rounds of ATP-dependent interactions between DnaJ, DnaK and GrpE are required for fully efficient folding. Also involved, together with DnaK and GrpE, in the DNA replication of plasmids through activation of initiation proteins. This is Chaperone protein DnaJ from Lactococcus lactis subsp. cremoris (strain MG1363).